Here is a 404-residue protein sequence, read N- to C-terminus: uncharacterized protein (404 aa).

The next 11 helical transmembrane spans lie at Trp-15–Leu-35, Asn-43–Ala-63, Met-84–Phe-104, Gly-121–Ile-141, Ile-154–Val-174, Ile-187–Ala-207, Val-231–Val-251, Ile-279–Ser-299, Gly-316–Ala-336, Ile-338–Leu-358, and Pro-373–Tyr-393.

The protein belongs to the NRAMP family.

Its subcellular location is the cell membrane. This is an uncharacterized protein from Bacillus subtilis (strain 168).